Reading from the N-terminus, the 1499-residue chain is Multidrug resistance protein CDR2 (1499 aa).

Topologically, residues Met1–Ser511 are cytoplasmic. The 255-residue stretch at Phe148 to Gln402 folds into the ABC transporter 1 domain. The next 6 helical transmembrane spans lie at Ile512 to Phe532, Gly546 to Leu566, Leu596 to Leu616, Gly621 to Phe641, Val660 to Gly680, and Phe763 to Phe783. The Cytoplasmic segment spans residues Asn784–Gly1193. The ABC transporter 2 domain maps to Phe857 to Ala1101. ATP is bound at residue Gly893–Thr900. A run of 6 helical transmembrane segments spans residues Tyr1194–Phe1214, Ala1229–Val1249, Ile1279–Leu1299, Leu1315–Ile1335, Leu1354–Phe1374, and Phe1465–Leu1485.

Belongs to the ABC transporter superfamily. ABCG family. PDR (TC 3.A.1.205) subfamily.

It localises to the membrane. Functionally, multidrug efflux transporter. Confers resistance to azole antifungal agents, to other antifungals (terbinafine, amorolfine) and to a variety of metabolic inhibitors. The protein is Multidrug resistance protein CDR2 (CDR2) of Candida albicans (strain SC5314 / ATCC MYA-2876) (Yeast).